The following is a 131-amino-acid chain: Squamosa promoter-binding protein 1 (131 aa).

Basic and acidic residues predominate over residues 1–10 (MDTSKGEGKR). The disordered stretch occupies residues 1-52 (MDTSKGEGKRVIKLPGSQEQGEEEDDIGEDSKKTRALTPSGKRASGSTQRSC). The segment at 49-126 (QRSCQVENCA…AGHNERRRKS (78 aa)) adopts an SBP-type zinc-finger fold. Residues cysteine 52, cysteine 57, cysteine 74, histidine 77, cysteine 93, cysteine 96, histidine 100, and cysteine 112 each contribute to the Zn(2+) site. A Bipartite nuclear localization signal motif is present at residues 109–125 (KRSCRRRLAGHNERRRK).

The protein localises to the nucleus. In terms of biological role, probable transcriptional factor. Binds to the promoter of the SQUAMOSA gene. The protein is Squamosa promoter-binding protein 1 (SBP1) of Antirrhinum majus (Garden snapdragon).